The chain runs to 309 residues: Homoserine O-succinyltransferase (309 aa).

C142 serves as the catalytic Acyl-thioester intermediate. Positions 163 and 192 each coordinate substrate. H235 (proton acceptor) is an active-site residue. The active site involves E237. R249 is a binding site for substrate.

It belongs to the MetA family. As to quaternary structure, homodimer.

It is found in the cytoplasm. It catalyses the reaction L-homoserine + succinyl-CoA = O-succinyl-L-homoserine + CoA. Its pathway is amino-acid biosynthesis; L-methionine biosynthesis via de novo pathway; O-succinyl-L-homoserine from L-homoserine: step 1/1. Transfers a succinyl group from succinyl-CoA to L-homoserine, forming succinyl-L-homoserine. In Escherichia coli O127:H6 (strain E2348/69 / EPEC), this protein is Homoserine O-succinyltransferase.